We begin with the raw amino-acid sequence, 1465 residues long: MSDLFAKLMDQIEMPLDMRRSSAFSSADIIEVKVHSVSRLWEFHFAFAAVLPIATYRELHDRLIRTFEAADIKVTFDIQAAQVDYSDDLLQAYYQEAFEHAPCNSASFKSSFSKLKVTYEDDKLIIAAPGFVNNDHFRNNHLPNLVKQLEAFGFGILTIDMVSDQEMTEHLTKNFVSSRQALVKKAVQDNLEAQKSLEAMMPPVEEATPAPKFDYKERAAKRQAGFEKATITPMIEIETEENRIVFEGMVFDVERKTTRTGRHIINFKMTDYTSSFALQKWAKDDEELRKFDMIAKGAWLRVQGNIETNPFTKSLTMNVQQVKEIVRHERKDLMPEGQKRVELHAHTNMSTMDALPTVESLIDTAAKWGHKAIAITDHANVQSFPHGYHRARKAGIKAIFGLEANIVEDKVPISYEPVDMDLHEATYVVFDVETTGLSAMNNDLIQIAASKMFKGNIVEQFDEFIDPGHPLSAFTTELTGITDKHLQGAKPLVTVLKAFQDFCKDSILVAHNASFDVGFMNANYERHDLPKITQPVIDTLEFARNLYPEYKRHGLGPLTKRFQVSLDHHHMANYDAEATGRLLFIFLKDAREKHGIKNLLQLNTDLVAEDSYKKARIKHATIYVQNQVGLKNMFKLVSLSNIKYFEGVPRIPRTVLDAHREGLLLGTACSDGEVFDAVLTKGIDAAVDLARYYDFIEIMPPAIYQPLVVRELIKDQAGIEQVIRDLIEVGKRAKKPVLATGNVHYLEPEEEIYREIIVRSLGQGAMINRTIGRGEGAQPAPLPKAHFRTTNEMLDEFAFLGKDLAYQVVVQNTQDFADRIEEVEVVKGDLYTPYIDKAEETVAELTYQKAFEIYGNPLPDIIDLRIEKELTSILGNGFAVIYLASQMLVNRSNERGYLVGSRGSVGSSFVATMIGITEVNPMPPHYVCPSCQHSEFITDGSVGSGYDLPNKPCPKCGTPYQKDGQDIPFETFLGFDGDKVPDIDLNFSGDDQPSAHLDVRDIFGDEYAFRAGTVGTVAEKTAYGFVKGYERDYGKFYRDAEVDRLAAGAAGVKRTTGQHPGGIVVIPNYMDVYDFTPVQYPADDVTASWQTTHFNFHDIDENVLKLDILGHDDPTMIRKLQDLSGIDPITIPADDPGVMALFSGTEVLGVTPEQIGTPTGMLGIPEFGTNFVRGMVNETHPTTFAELLQLSGLSHGTDVWLGNAQDLIKEGIATLKTVIGCRDDIMVYLMHAGLEPKMAFTIMERVRKGLWLKISEEERNGYIDAMRENNVPDWYIESCGKIKYMFPKAHAAAYVLMALRVAYFKVHHPIMYYCAYFSIRAKAFELKTMSGGLDAVKARMEDITIKRKNNEATNVENDLFTTLEIVNEMLERGFKFGKLDLYKSDAIEFQIKGDTLIPPFIALEGLGENVAKQIVKARQEGEFLSKMELRKRGGASSTLVEKMDEMGILGNMPEDNQLSLFDDFF.

The Exonuclease domain occupies Tyr427–Leu583.

This sequence belongs to the DNA polymerase type-C family. PolC subfamily.

The protein resides in the cytoplasm. It catalyses the reaction DNA(n) + a 2'-deoxyribonucleoside 5'-triphosphate = DNA(n+1) + diphosphate. In terms of biological role, required for replicative DNA synthesis. This DNA polymerase also exhibits 3' to 5' exonuclease activity. The sequence is that of DNA polymerase III PolC-type from Streptococcus pyogenes serotype M1.